Reading from the N-terminus, the 380-residue chain is Alpha-N-acetylneuraminate alpha-2,8-sialyltransferase ST8SIA3 (380 aa).

Residues 1 to 9 (MRNCKMARV) are Cytoplasmic-facing. The helical; Signal-anchor for type II membrane protein transmembrane segment at 10 to 33 (ASVLGLVMLSVALLILSLISYVSL) threads the bilayer. Over 34-380 (KKENIFTTPK…LTKLTLSHCA (347 aa)) the chain is Lumenal. N-linked (GlcNAc...) asparagine glycosylation is found at Asn-93, Asn-113, and Asn-160. 2 disulfide bridges follow: Cys-162–Cys-313 and Cys-176–Cys-379. CMP-N-acetyl-beta-neuraminate contacts are provided by Asn-167 and Asn-190. Residue Asn-206 is glycosylated (N-linked (GlcNAc...) asparagine). CMP-N-acetyl-beta-neuraminate-binding residues include Ser-300, Thr-301, Gly-302, Trp-322, Tyr-336, and His-337. His-354 serves as the catalytic Proton donor/acceptor.

The protein belongs to the glycosyltransferase 29 family. As to quaternary structure, homodimer. In terms of processing, autopolysialylated. In terms of tissue distribution, expressed in fetal and adult brain and fetal liver.

The protein localises to the golgi apparatus membrane. The enzyme catalyses [N-acetyl-alpha-D-neuraminosyl-(2-&gt;8)](n) + CMP-N-acetyl-beta-neuraminate = [N-acetyl-alpha-D-neuraminosyl-(2-&gt;8)](n+1) + CMP + H(+). The catalysed reaction is alpha-Neu5Ac-(2-&gt;3)-beta-D-Gal-(1-&gt;4)-6S-D-GlcNAc + CMP-N-acetyl-beta-neuraminate = alpha-Neu5Ac-(2-&gt;8)-alpha-Neu5Ac-(2-&gt;3)-beta-D-Gal-(1-&gt;4)-6S-D-GlcNAc + CMP + H(+). It carries out the reaction a ganglioside GM3 (d18:1(4E)) + CMP-N-acetyl-beta-neuraminate = a ganglioside GD3 (d18:1(4E)) + CMP + H(+). It catalyses the reaction a ganglioside GM3 + CMP-N-acetyl-beta-neuraminate = a ganglioside GD3 + CMP + H(+). The enzyme catalyses an N-acetyl-alpha-neuraminyl-(2-&gt;3)-beta-D-galactosyl derivative + CMP-N-acetyl-beta-neuraminate = an N-acetyl-alpha-neuraminyl-(2-&gt;8)-N-acetyl-alpha-neuraminyl-(2-&gt;3)-beta-D-galactosyl derivative + CMP + H(+). The catalysed reaction is an N-acetyl-alpha-neuraminyl-(2-&gt;3)-beta-D-galactosyl-(1-&gt;4)-N-acetyl-beta-D-glucosaminyl derivative + CMP-N-acetyl-beta-neuraminate = an alpha-Neu5Ac-(2-&gt;8)-alpha-Neu5Ac-(2-&gt;3)-beta-D-Gal-(1-&gt;4)-beta-D-GlcNAc derivative + CMP + H(+). It participates in protein modification; protein glycosylation. Its function is as follows. Catalyzes the transfer of sialic acid from a CMP-linked sialic acid donor onto a terminal alpha-2,3-, alpha-2,6-, or alpha-2,8-linked sialic acid of an acceptor, such as N-linked oligosaccharides of glycoproteins and glycolipids through alpha-2,8-linkages. Forms oligosialic and polysialic acid on various sialylated N-acetyllactosamine oligosaccharides of glycoproteins, including FETUB N-glycans, a2-HS-glycoprotein (AHSG) and alpha 2,3-sialylated glycosphingolipids, such as alpha 2,3-sialylparagloboside and ganglioside GM3 and to a lesser extent NCAM1 N-glycans. However, it is much more specific to N-linked oligosaccharides of glycoproteins than glycosphingolipids. 2,3-sialylparagloboside serves as the best acceptor substrate among the glycolipids. alpha-Neu5Ac-(2-&gt;8)-alpha-Neu5Ac-(2-&gt;3)-beta-D-Gal-(1-&gt;4)-6S-D-GlcNAc and monosialyl and disialyl N-acetyllactosamines are the best acceptor substrates among glycoproteins. May plays critical role in the striatum by mediating the formation of disialylated and trisialylated terminal glycotopes on N- and O-glycans of specific striatal proteins, regulating their distribution in lipid rafts, affecting their interaction with other binding partners, and subsequently modulating striatal functions. The sequence is that of Alpha-N-acetylneuraminate alpha-2,8-sialyltransferase ST8SIA3 from Homo sapiens (Human).